The chain runs to 161 residues: Small ribosomal subunit protein uS19 (161 aa).

The span at 1–19 shows a compositional bias: basic residues; that stretch reads MARQKKYSGKGGARKKNKQ. Residues 1-26 form a disordered region; it reads MARQKKYSGKGGARKKNKQKQNVAPR.

The protein belongs to the universal ribosomal protein uS19 family.

Its function is as follows. Protein S19 forms a complex with S13 that binds strongly to the 16S ribosomal RNA. The polypeptide is Small ribosomal subunit protein uS19 (Methanococcus maripaludis (strain C5 / ATCC BAA-1333)).